The sequence spans 236 residues: Pyridoxine 5'-phosphate synthase (236 aa).

Asparagine 7 serves as a coordination point for 3-amino-2-oxopropyl phosphate. 9 to 10 (DH) contributes to the 1-deoxy-D-xylulose 5-phosphate binding site. Arginine 18 is a binding site for 3-amino-2-oxopropyl phosphate. Residue histidine 43 is the Proton acceptor of the active site. The 1-deoxy-D-xylulose 5-phosphate site is built by arginine 45 and histidine 50. Residue glutamate 69 is the Proton acceptor of the active site. Threonine 99 is a binding site for 1-deoxy-D-xylulose 5-phosphate. The active-site Proton donor is the histidine 190. 3-amino-2-oxopropyl phosphate contacts are provided by residues glycine 191 and 212-213 (GH).

Belongs to the PNP synthase family. In terms of assembly, homooctamer; tetramer of dimers.

The protein resides in the cytoplasm. The catalysed reaction is 3-amino-2-oxopropyl phosphate + 1-deoxy-D-xylulose 5-phosphate = pyridoxine 5'-phosphate + phosphate + 2 H2O + H(+). Its pathway is cofactor biosynthesis; pyridoxine 5'-phosphate biosynthesis; pyridoxine 5'-phosphate from D-erythrose 4-phosphate: step 5/5. Catalyzes the complicated ring closure reaction between the two acyclic compounds 1-deoxy-D-xylulose-5-phosphate (DXP) and 3-amino-2-oxopropyl phosphate (1-amino-acetone-3-phosphate or AAP) to form pyridoxine 5'-phosphate (PNP) and inorganic phosphate. The sequence is that of Pyridoxine 5'-phosphate synthase from Desulfosudis oleivorans (strain DSM 6200 / JCM 39069 / Hxd3) (Desulfococcus oleovorans).